Here is a 60-residue protein sequence, read N- to C-terminus: Conotoxin Pu5.6 (60 aa).

The signal sequence occupies residues 1-19 (MRCVPVFVILLLLIASAAS). Residues 20 to 47 (IDAQQKTKDDAPLTSLNDNALQQHWNKR) constitute a propeptide that is removed on maturation.

This sequence belongs to the conotoxin T superfamily. Post-translationally, contains 2 disulfide bonds that can be either 'C1-C3, C2-C4' or 'C1-C4, C2-C3', since these disulfide connectivities have been observed for conotoxins with cysteine framework V (for examples, see AC P0DQQ7 and AC P81755). As to expression, expressed by the venom duct.

It localises to the secreted. This chain is Conotoxin Pu5.6, found in Conus pulicarius (Flea-bitten cone).